We begin with the raw amino-acid sequence, 200 residues long: Probable nicotinate-nucleotide adenylyltransferase (200 aa).

This sequence belongs to the NadD family.

It catalyses the reaction nicotinate beta-D-ribonucleotide + ATP + H(+) = deamido-NAD(+) + diphosphate. It participates in cofactor biosynthesis; NAD(+) biosynthesis; deamido-NAD(+) from nicotinate D-ribonucleotide: step 1/1. Its function is as follows. Catalyzes the reversible adenylation of nicotinate mononucleotide (NaMN) to nicotinic acid adenine dinucleotide (NaAD). The chain is Probable nicotinate-nucleotide adenylyltransferase from Lachnoclostridium phytofermentans (strain ATCC 700394 / DSM 18823 / ISDg) (Clostridium phytofermentans).